We begin with the raw amino-acid sequence, 1053 residues long: Middle cell wall protein (1053 aa).

The signal sequence occupies residues 1–23 (MKKVVNSVLASALALTVAPMAFA). SLH domains lie at 26 to 89 (EAAT…KLAQ), 90 to 153 (FSNT…KGVW), and 154 to 203 (PNSM…FGTD).

The middle cell wall layer is composed of subunits of the middle cell wall protein. These proteins form a hexagonal array with a lattice constant of 14.5 nM in the middle cell wall layers.

Its subcellular location is the secreted. The protein localises to the cell wall. It localises to the S-layer. The middle wall protein binds to peptidoglycan and to the outer cell wall protein. The chain is Middle cell wall protein from Brevibacillus brevis (strain 47 / JCM 6285 / NBRC 100599).